The sequence spans 939 residues: Protein translocase subunit SecA (939 aa).

ATP-binding positions include glutamine 85, 103–107 (GEGKT), and aspartate 504. The tract at residues 850-939 (PVQDGAERPS…KGGGGRRRKK (90 aa)) is disordered. The span at 854-864 (GAERPSLEKEG) shows a compositional bias: basic and acidic residues. Residues 924–939 (ERRKAQKGGGGRRRKK) are compositionally biased toward basic residues.

Belongs to the SecA family. Monomer and homodimer. Part of the essential Sec protein translocation apparatus which comprises SecA, SecYEG and auxiliary proteins SecDF. Other proteins may also be involved.

It is found in the cell membrane. The protein resides in the cytoplasm. The catalysed reaction is ATP + H2O + cellular proteinSide 1 = ADP + phosphate + cellular proteinSide 2.. Its function is as follows. Part of the Sec protein translocase complex. Interacts with the SecYEG preprotein conducting channel. Has a central role in coupling the hydrolysis of ATP to the transfer of proteins into and across the cell membrane, serving as an ATP-driven molecular motor driving the stepwise translocation of polypeptide chains across the membrane. In Streptomyces griseus subsp. griseus (strain JCM 4626 / CBS 651.72 / NBRC 13350 / KCC S-0626 / ISP 5235), this protein is Protein translocase subunit SecA.